We begin with the raw amino-acid sequence, 328 residues long: Probable ABC transporter permease YtrC (328 aa).

Helical transmembrane passes span 16 to 36, 60 to 80, 110 to 130, 144 to 164, 167 to 187, 236 to 256, 277 to 297, and 300 to 320; these read VVILLSIAFLVLANPLSIVNT, ISNLIDINWVPGVILAVCFLG, GFVIVLSQLIGFLLAWLLILV, IGVIVISFMAFSLVMAAGALT, AFAQLLTAFSAAILPYLIIAL, YLLLIPAVMSMLFYLIGFISF, VQILVMAFGILGFGLFGYYTG, and IIGYILGMIIGAVAGFFVSYF.

It belongs to the ABC-5 integral membrane protein family. The complex is composed of 2 ATP-binding proteins (YtrB and YtrE), 2 transmembrane proteins (YtrC and YtrD) and a solute-binding protein (YtrF).

It localises to the cell membrane. Part of the ABC transporter complex YtrBCDEF that plays a role in acetoin utilization during stationary phase and sporulation. The sequence is that of Probable ABC transporter permease YtrC (ytrC) from Bacillus subtilis (strain 168).